The following is a 269-amino-acid chain: Small ribosomal subunit protein eS1 (269 aa).

The segment at 1-20 (MAVGKNKGVSKGGKKGSKKK) is disordered.

The protein belongs to the eukaryotic ribosomal protein eS1 family. In terms of assembly, component of the small ribosomal subunit. Mature ribosomes consist of a small (40S) and a large (60S) subunit. The 40S subunit contains about 33 different proteins and 1 molecule of RNA (18S). The 60S subunit contains about 49 different proteins and 3 molecules of RNA (28S, 5.8S and 5S).

It localises to the cytoplasm. In terms of biological role, has an essential role in oogenesis. The protein is Small ribosomal subunit protein eS1 of Anopheles gambiae (African malaria mosquito).